The sequence spans 367 residues: MGSGYQLLQLPRERFRKTSFLVWVIILFQRAISMPLGIVTNSTLKATEIDQLVCRDKLSSTSQLKSVGLNLEGNGIATDVPSATKRWGFRSGVPPKVVSYEAGEWAENCYNLEIKKSDGSECLPLPPDGVRGFPRCRYVHKVQGTGPCPGDLAFHKNGAFFLYDRLASTVIYRGTTFAEGVVAFLILSEPKKHFWKATPAHEPVNTTDDSTSYYMTLTLSYEMSNFGGNESNTLFKVDNHTYVQLDRPHTPQFLVQLNETLRRNNRLSNSTGRLTWTLDPKIEPDVGEWAFWETKKTFPNNFMEKTCISKFYQPTPTTPQIRARRELSKEKLATTHPPTTPSWFQRIPLQWFQCSLQDGQRKCRPKV.

Positions 1–33 (MGSGYQLLQLPRERFRKTSFLVWVIILFQRAIS) are cleaved as a signal peptide. The N-linked (GlcNAc...) asparagine; by host glycan is linked to Asn-41. Disulfide bonds link Cys-109–Cys-136 and Cys-122–Cys-148. 5 N-linked (GlcNAc...) asparagine; by host glycosylation sites follow: Asn-205, Asn-229, Asn-239, Asn-258, and Asn-269.

Belongs to the filoviruses glycoprotein family. In terms of assembly, homodimer; disulfide-linked. The homodimers are linked by two disulfide bonds in a parallel orientation. Monomer. This precursor is processed into mature sGP and delta-peptide by host furin or furin-like proteases. The cleavage site corresponds to the furin optimal cleavage sequence [KR]-X-[KR]-R. In terms of processing, N-glycosylated. Post-translationally, O-glycosylated.

It is found in the secreted. Functionally, seems to possess an anti-inflammatory activity as it can reverse the barrier-decreasing effects of TNF alpha. Might therefore contribute to the lack of inflammatory reaction seen during infection in spite the of extensive necrosis and massive virus production. Does not seem to be involved in activation of primary macrophages. Does not seem to interact specifically with neutrophils. Its function is as follows. Viroporin that permeabilizes mammalian cell plasma membranes. It acts by altering permeation of ionic compounds and small molecules. This activity may lead to viral enterotoxic activity. The polypeptide is Pre-small/secreted glycoprotein (GP) (Epomops franqueti (Franquet's epauletted fruit bat)).